The chain runs to 284 residues: NAD(P)H-hydrate epimerase (284 aa).

The N-terminal 55 residues, 1–55 (MSGLRTLLGLGLLVSSSRFPRVVARGGPRCPGPAWWAARPMHLGDSTMAGGTVKY), are a transit peptide targeting the mitochondrion. The 211-residue stretch at 61–271 (AQAVDEELFN…DLEKKYQLNL (211 aa)) folds into the YjeF N-terminal domain. 115 to 119 (NNGGD) contributes to the (6S)-NADPHX binding site. Asn116 is a K(+) binding site. Lys140 is modified (N6-succinyllysine). Asp181 contacts K(+). Residues 185–191 (GFSFKGA) and Asp214 contribute to the (6S)-NADPHX site. Ser217 contributes to the K(+) binding site.

Belongs to the NnrE/AIBP family. Homodimer. Interacts with APOA1 and APOA2. The cofactor is K(+). Post-translationally, undergoes physiological phosphorylation during sperm capacitation, downstream to PKA activation.

It is found in the mitochondrion. The protein resides in the secreted. It catalyses the reaction (6R)-NADHX = (6S)-NADHX. The catalysed reaction is (6R)-NADPHX = (6S)-NADPHX. Its function is as follows. Catalyzes the epimerization of the S- and R-forms of NAD(P)HX, a damaged form of NAD(P)H that is a result of enzymatic or heat-dependent hydration. This is a prerequisite for the S-specific NAD(P)H-hydrate dehydratase to allow the repair of both epimers of NAD(P)HX. Accelerates cholesterol efflux from endothelial cells to high-density lipoprotein (HDL) and thereby regulates angiogenesis. This Monodelphis domestica (Gray short-tailed opossum) protein is NAD(P)H-hydrate epimerase.